We begin with the raw amino-acid sequence, 205 residues long: GTP cyclohydrolase 1 (205 aa).

The Zn(2+) site is built by cysteine 93, histidine 96, and cysteine 166.

The protein belongs to the GTP cyclohydrolase I family. As to quaternary structure, homomer.

It carries out the reaction GTP + H2O = 7,8-dihydroneopterin 3'-triphosphate + formate + H(+). It participates in cofactor biosynthesis; 7,8-dihydroneopterin triphosphate biosynthesis; 7,8-dihydroneopterin triphosphate from GTP: step 1/1. This chain is GTP cyclohydrolase 1, found in Mycobacterium leprae (strain Br4923).